A 276-amino-acid polypeptide reads, in one-letter code: Phospholipid phosphatase 2 (276 aa).

At 1–4 (MERR) the chain is on the cytoplasmic side. Residues 5–25 (WVFVLLDVLCVLVASLPFIIL) traverse the membrane as a helical segment. At 26-51 (TLVNAPYKRGFYCGDDSIRYPYRPDT) the chain is on the lumenal side. The chain crosses the membrane as a helical span at residues 52-72 (ITHGLMAGVIITATVVLVSSG). Residues 73–87 (EAYLVYTDRLYSRSD) are Cytoplasmic-facing. The chain crosses the membrane as a helical span at residues 88 to 108 (FNNYVAAIYKVLGTFLFGAAV). At 109-161 (SQSLTDLAKYMIGRLRPSFLAVCDPDWSRVNCSGYVQVEVCRGSPANVTEARL) the chain is on the lumenal side. Residues 117–125 (KYMIGRLRP) are phosphatase sequence motif I. N-linked (GlcNAc...) asparagine glycosylation is found at Asn139 and Asn155. The chain crosses the membrane as a helical span at residues 162–182 (SFYSGHSSFGMYCMLFLALYV). Positions 164–167 (YSGH) are phosphatase sequence motif II. The active-site Proton donors is the His167. Over 183-189 (QARLCWK) the chain is Cytoplasmic. A helical membrane pass occupies residues 190–210 (WARLLRPTVQFFLVAFAIYVG). Over 211 to 225 (YTRVSDNKHHWSDVL) the chain is Lumenal. Residues 212–223 (TRVSDNKHHWSD) are phosphatase sequence motif III. The Nucleophile role is filled by His219. A helical transmembrane segment spans residues 226 to 246 (VGLLQGALVACLTVCYVSDFF). The Cytoplasmic portion of the chain corresponds to 247–276 (KSRPPQSCQENEESERKPSLSLTLTLGDRP). The tract at residues 252–276 (QSCQENEESERKPSLSLTLTLGDRP) is disordered.

Belongs to the PA-phosphatase related phosphoesterase family. Forms functional homodimers and homooligomers. Can also form heterooligomers with PLPP1 and PLPP3. In terms of processing, N-glycosylated. As to expression, expressed in the brain.

The protein resides in the membrane. It is found in the cell membrane. It localises to the early endosome membrane. The protein localises to the endoplasmic reticulum membrane. The enzyme catalyses a 1,2-diacyl-sn-glycero-3-phosphate + H2O = a 1,2-diacyl-sn-glycerol + phosphate. The catalysed reaction is 1,2-dihexadecanoyl-sn-glycero-3-phosphate + H2O = 1,2-dihexadecanoyl-sn-glycerol + phosphate. It catalyses the reaction 1,2-di-(9Z-octadecenoyl)-sn-glycero-3-phosphate + H2O = 1,2-di-(9Z-octadecenoyl)-sn-glycerol + phosphate. It carries out the reaction a monoacyl-sn-glycero-3-phosphate + H2O = a monoacylglycerol + phosphate. The enzyme catalyses (9Z)-octadecenoyl-sn-glycero-3-phosphate + H2O = (9Z-octadecenoyl)-glycerol + phosphate. The catalysed reaction is sphing-4-enine 1-phosphate + H2O = sphing-4-enine + phosphate. It catalyses the reaction an N-acylsphing-4-enine 1-phosphate + H2O = an N-acylsphing-4-enine + phosphate. It carries out the reaction N-(octanoyl)-sphing-4-enine-1-phosphate + H2O = N-octanoylsphing-4-enine + phosphate. The enzyme catalyses N-(9Z-octadecenoyl)-ethanolamine phosphate + H2O = N-(9Z-octadecenoyl) ethanolamine + phosphate. It functions in the pathway lipid metabolism; phospholipid metabolism. Magnesium-independent phospholipid phosphatase. Insensitive to N-ethylmaleimide. Magnesium-independent phospholipid phosphatase that catalyzes the dephosphorylation of a variety of glycerolipid and sphingolipid phosphate esters including phosphatidate/PA, lysophosphatidate/LPA, sphingosine 1-phosphate/S1P and ceramide 1-phosphate/C1P. Has no apparent extracellular phosphatase activity and therefore most probably acts intracellularly. Also acts on N-oleoyl ethanolamine phosphate/N-(9Z-octadecenoyl)-ethanolamine phosphate, a potential physiological compound. Through dephosphorylation of these bioactive lipid mediators produces new bioactive compounds and may regulate signal transduction in different cellular processes. Indirectly regulates, for instance, cell cycle G1/S phase transition through its phospholipid phosphatase activity. The chain is Phospholipid phosphatase 2 from Rattus norvegicus (Rat).